Consider the following 477-residue polypeptide: PTS system glucose-specific EIICB component (477 aa).

Topologically, residues 1–14 (MFKNAFANLQKVGK) are cytoplasmic. Residues 1 to 388 (MFKNAFANLQ…LDLKTPGRED (388 aa)) enclose the PTS EIIC type-1 domain. Residues 15-35 (SLMLPVSVLPIAGILLGVGSA) traverse the membrane as a helical segment. Residues 36 to 50 (NFSWLPAVVSHVMAE) are Periplasmic-facing. Residues 51-71 (AGGSVFANMPLIFAIGVALGF) traverse the membrane as a helical segment. At 72-79 (TNNDGVSA) the chain is on the cytoplasmic side. Residues 80–100 (LAAVVAYGIMVKTMAVVAPLV) form a helical membrane-spanning segment. Over 101–111 (LHLPAEEIASK) the chain is Periplasmic. Residues 112–132 (HLADTGVLGGIISGAIAAYMF) form a helical membrane-spanning segment. At 133–151 (NRFYRIKLPEYLGFFAGKR) the chain is on the cytoplasmic side. The helical transmembrane segment at 152 to 172 (FVPIISGLAAIFTGVVLSFIW) threads the bilayer. Residues 173 to 190 (PPIGSAIQTFSQWAAYQN) are Periplasmic-facing. The helical transmembrane segment at 191 to 211 (PVVAFGIYGFIERCLVPFGLH) threads the bilayer. At 212 to 249 (HIWNVPFQMQIGEYTNAAGQVFHGDIPRYMAGDPTAGK) the chain is on the cytoplasmic side. A helical transmembrane segment spans residues 250-270 (LSGGFLFKMYGLPAAAIAIWH). Over 271–279 (SAKPENRAK) the chain is Periplasmic. The chain crosses the membrane as a helical span at residues 280–300 (VGGIMISAALTSFLTGITEPI). The Cytoplasmic segment spans residues 301-309 (EFSFMFVAP). The helical transmembrane segment at 310–330 (ILYIIHAILAGLAFPICILLG) threads the bilayer. At 331–355 (MRDGTSFSHGLIDFIVLSGNSSKLW) the chain is on the periplasmic side. Residues 356–376 (LFPIVGIGYAIVYYTIFRVLI) form a helical membrane-spanning segment. The Cytoplasmic segment spans residues 377-477 (KALDLKTPGR…TEMDEYIRNH (101 aa)). Positions 399-477 (SEMAPALVAA…TEMDEYIRNH (79 aa)) constitute a PTS EIIB type-1 domain. Residue Cys421 is the Phosphocysteinsyse intermediate; for EIIB activity of the active site. Cys421 carries the phosphocysteine modification.

The protein resides in the cell inner membrane. The enzyme catalyses N(pros)-phospho-L-histidyl-[protein] + D-glucose(out) = D-glucose 6-phosphate(in) + L-histidyl-[protein]. The phosphoenolpyruvate-dependent sugar phosphotransferase system (sugar PTS), a major carbohydrate active transport system, catalyzes the phosphorylation of incoming sugar substrates concomitantly with their translocation across the cell membrane. The enzyme II complex composed of PtsG and Crr is involved in glucose transport. Also functions as a chemoreceptor monitoring the environment for changes in sugar concentration. This is PTS system glucose-specific EIICB component (ptsG) from Escherichia coli O6:H1 (strain CFT073 / ATCC 700928 / UPEC).